Reading from the N-terminus, the 549-residue chain is Glucose-6-phosphate isomerase (549 aa).

Catalysis depends on E353, which acts as the Proton donor. Catalysis depends on residues H384 and K513.

Belongs to the GPI family.

The protein localises to the cytoplasm. The enzyme catalyses alpha-D-glucose 6-phosphate = beta-D-fructose 6-phosphate. It functions in the pathway carbohydrate biosynthesis; gluconeogenesis. It participates in carbohydrate degradation; glycolysis; D-glyceraldehyde 3-phosphate and glycerone phosphate from D-glucose: step 2/4. Catalyzes the reversible isomerization of glucose-6-phosphate to fructose-6-phosphate. This chain is Glucose-6-phosphate isomerase, found in Brucella anthropi (strain ATCC 49188 / DSM 6882 / CCUG 24695 / JCM 21032 / LMG 3331 / NBRC 15819 / NCTC 12168 / Alc 37) (Ochrobactrum anthropi).